A 347-amino-acid polypeptide reads, in one-letter code: 3-isopropylmalate dehydrogenase (347 aa).

76–87 (GPKWTDPNNRPE) is an NAD(+) binding site. 4 residues coordinate substrate: Arg94, Arg104, Arg132, and Asp217. Positions 217, 241, and 245 each coordinate Mg(2+). 275–287 (GSAPDIANEDKAN) contributes to the NAD(+) binding site.

This sequence belongs to the isocitrate and isopropylmalate dehydrogenases family. LeuB type 1 subfamily. In terms of assembly, homodimer. Requires Mg(2+) as cofactor. Mn(2+) is required as a cofactor.

Its subcellular location is the cytoplasm. The catalysed reaction is (2R,3S)-3-isopropylmalate + NAD(+) = 4-methyl-2-oxopentanoate + CO2 + NADH. Its pathway is amino-acid biosynthesis; L-leucine biosynthesis; L-leucine from 3-methyl-2-oxobutanoate: step 3/4. Functionally, catalyzes the oxidation of 3-carboxy-2-hydroxy-4-methylpentanoate (3-isopropylmalate) to 3-carboxy-4-methyl-2-oxopentanoate. The product decarboxylates to 4-methyl-2 oxopentanoate. The polypeptide is 3-isopropylmalate dehydrogenase (Staphylococcus epidermidis (strain ATCC 12228 / FDA PCI 1200)).